A 198-amino-acid chain; its full sequence is Ribosome maturation factor RimP (198 aa).

The protein belongs to the RimP family.

It localises to the cytoplasm. Required for maturation of 30S ribosomal subunits. This chain is Ribosome maturation factor RimP, found in Agrobacterium fabrum (strain C58 / ATCC 33970) (Agrobacterium tumefaciens (strain C58)).